The chain runs to 303 residues: N-acetylmuramic acid 6-phosphate etherase (303 aa).

Positions 61 to 224 (IVQAFQQGGR…TTASMILLGK (164 aa)) constitute an SIS domain. Residue glutamate 89 is the Proton donor of the active site. Glutamate 120 is a catalytic residue.

Belongs to the GCKR-like family. MurNAc-6-P etherase subfamily. In terms of assembly, homodimer.

It carries out the reaction N-acetyl-D-muramate 6-phosphate + H2O = N-acetyl-D-glucosamine 6-phosphate + (R)-lactate. Its pathway is amino-sugar metabolism; 1,6-anhydro-N-acetylmuramate degradation. It participates in amino-sugar metabolism; N-acetylmuramate degradation. The protein operates within cell wall biogenesis; peptidoglycan recycling. Functionally, specifically catalyzes the cleavage of the D-lactyl ether substituent of MurNAc 6-phosphate, producing GlcNAc 6-phosphate and D-lactate. Together with AnmK, is also required for the utilization of anhydro-N-acetylmuramic acid (anhMurNAc) either imported from the medium or derived from its own cell wall murein, and thus plays a role in cell wall recycling. This chain is N-acetylmuramic acid 6-phosphate etherase (murQ), found in Haemophilus influenzae (strain ATCC 51907 / DSM 11121 / KW20 / Rd).